The following is a 694-amino-acid chain: ATP-binding cassette sub-family G member 8 (694 aa).

Over 1 to 437 the chain is Cytoplasmic; sequence MAEKTKEETQ…ISNDFRDLPT (437 aa). In terms of domain architecture, ABC transporter spans 91–335; that stretch reads AQFKLPWRSR…FTSIGYPCPR (245 aa). The ABC transmembrane type-2 domain maps to 436–684; it reads PTLFIHGAEA…FLSLYYLSLK (249 aa). The helical transmembrane segment at 438–458 threads the bilayer; that stretch reads LFIHGAEACLMSLIIGFLYYG. Over 459-468 the chain is Extracellular; the sequence is HADKPLSFMD. Residues 469-489 traverse the membrane as a helical segment; that stretch reads MAALLFMIGALIPFNVILDVV. Topologically, residues 490-518 are cytoplasmic; it reads SKCHSERSLLYYELEDGLYTAGPYFFAKV. The chain crosses the membrane as a helical span at residues 519–539; it reads LGELPEHCAYVIIYGMPIYWL. Residues 540 to 548 lie on the Extracellular side of the membrane; sequence TNLRPGPEL. The helical transmembrane segment at 549 to 569 threads the bilayer; that stretch reads FLLHFMLLWLVVFCCRTMALA. Over 570–576 the chain is Cytoplasmic; sequence ASAMLPT. Residues 577 to 597 form a helical membrane-spanning segment; the sequence is FHMSSFCCNALYNSFYLTAGF. Topologically, residues 598 to 660 are extracellular; sequence MINLNNLWIV…VTAMDLNSHP (63 aa). Asparagine 640 carries N-linked (GlcNAc...) asparagine glycosylation. Residues 661–681 traverse the membrane as a helical segment; that stretch reads LYAIYLIVIGISCGFLSLYYL. The Cytoplasmic segment spans residues 682–694; that stretch reads SLKFIKQKSIQDW.

Belongs to the ABC transporter superfamily. ABCG family. Eye pigment precursor importer (TC 3.A.1.204) subfamily. Heterodimer with ABCG8. Mg(2+) is required as a cofactor. In terms of processing, N-glycosylated. N-glycosylation is important for efficient export out of the endoplasmic reticulum. Highest expression in liver, with lower levels in small intestine and colon.

It is found in the cell membrane. Its subcellular location is the apical cell membrane. The catalysed reaction is cholesterol(in) + ATP + H2O = cholesterol(out) + ADP + phosphate + H(+). It catalyses the reaction sitosterol(in) + ATP + H2O = sitosterol(out) + ADP + phosphate + H(+). ABCG5 and ABCG8 form an obligate heterodimer that mediates Mg(2+)- and ATP-dependent sterol transport across the cell membrane. Plays an essential role in the selective transport of the dietary cholesterol in and out of the enterocytes and in the selective sterol excretion by the liver into bile. Required for normal sterol homeostasis. The heterodimer with ABCG5 has ATPase activity. This Rattus norvegicus (Rat) protein is ATP-binding cassette sub-family G member 8.